The following is an 860-amino-acid chain: Alanine--tRNA ligase (860 aa).

His553, His557, Cys655, and His659 together coordinate Zn(2+).

Belongs to the class-II aminoacyl-tRNA synthetase family. Requires Zn(2+) as cofactor.

It localises to the cytoplasm. The catalysed reaction is tRNA(Ala) + L-alanine + ATP = L-alanyl-tRNA(Ala) + AMP + diphosphate. In terms of biological role, catalyzes the attachment of alanine to tRNA(Ala) in a two-step reaction: alanine is first activated by ATP to form Ala-AMP and then transferred to the acceptor end of tRNA(Ala). Also edits incorrectly charged Ser-tRNA(Ala) and Gly-tRNA(Ala) via its editing domain. The chain is Alanine--tRNA ligase from Legionella pneumophila (strain Lens).